The chain runs to 226 residues: DELTA-thalatoxin-Avl1b (226 aa).

An N-terminal signal peptide occupies residues 1 to 21 (MRHFVVFLYMFLALSIPTAFA). The propeptide occupies 22–45 (KKHIVTKKGNHQDITNDNEGENAE). Positions 50-59 (AVAGAVIAGG) are plays an important role in the hemolytic activity. The tract at residues 58–77 (GGELALKILTKILDEIGKID) is N-terminal region. 6 residues coordinate phosphocholine: S101, V134, S152, P154, Y180, and Y184. The tract at residues 152-167 (SVPFDYNLYTNWWNVK) is trp-rich region, which is important for the binding to lipid membrane. A Cell attachment site, crucial for protein stability motif is present at residues 191 to 193 (KPS).

This sequence belongs to the actinoporin family. Sea anemone subfamily. As to quaternary structure, octamer or nonamer in membranes. Monomer in the soluble state.

The protein localises to the secreted. It is found in the nematocyst. Its subcellular location is the target cell membrane. In terms of biological role, pore-forming protein that forms cations-selective hydrophilic pores of around 1 nm and causes cytolysis. Pore formation is a multi-step process that involves specific recognition of membrane sphingomyelin (but neither cholesterol nor phosphatidylcholine) using aromatic rich region and adjacent phosphocholine (POC) binding site, firm binding to the membrane (mainly driven by hydrophobic interactions) accompanied by the transfer of the N-terminal region to the lipid-water interface and finally pore formation after oligomerization of monomers. The chain is DELTA-thalatoxin-Avl1b from Actineria villosa (Okinawan sea anemone).